A 356-amino-acid polypeptide reads, in one-letter code: Histidinol-phosphate aminotransferase (356 aa).

At K214 the chain carries N6-(pyridoxal phosphate)lysine.

The protein belongs to the class-II pyridoxal-phosphate-dependent aminotransferase family. Histidinol-phosphate aminotransferase subfamily. As to quaternary structure, homodimer. It depends on pyridoxal 5'-phosphate as a cofactor.

It catalyses the reaction L-histidinol phosphate + 2-oxoglutarate = 3-(imidazol-4-yl)-2-oxopropyl phosphate + L-glutamate. It participates in amino-acid biosynthesis; L-histidine biosynthesis; L-histidine from 5-phospho-alpha-D-ribose 1-diphosphate: step 7/9. This Escherichia coli (strain SMS-3-5 / SECEC) protein is Histidinol-phosphate aminotransferase.